We begin with the raw amino-acid sequence, 160 residues long: Nuclear transcription factor Y subunit B-5 (160 aa).

Residues 56–62 (LPIANVG) mediate DNA binding. The tract at residues 83-94 (MQECVSEFISFV) is subunit association domain (SAD).

Belongs to the NFYB/HAP3 subunit family. In terms of assembly, heterotrimeric transcription factor composed of three components, NF-YA, NF-YB and NF-YC. NF-YB and NF-YC must interact and dimerize for NF-YA association and DNA binding. As to expression, expressed in flowers and siliques.

The protein localises to the nucleus. Functionally, component of the NF-Y/HAP transcription factor complex. The NF-Y complex stimulates the transcription of various genes by recognizing and binding to a CCAAT motif in promoters. This is Nuclear transcription factor Y subunit B-5 (NFYB5) from Arabidopsis thaliana (Mouse-ear cress).